A 141-amino-acid polypeptide reads, in one-letter code: Lutropin subunit beta (141 aa).

A signal peptide spans 1 to 20 (MEMLQGLLLWLLLNVGGVWA). 6 disulfides stabilise this stretch: Cys-29–Cys-77, Cys-43–Cys-92, Cys-46–Cys-130, Cys-54–Cys-108, Cys-58–Cys-110, and Cys-113–Cys-120. The N-linked (GlcNAc...) asparagine glycan is linked to Asn-33.

It belongs to the glycoprotein hormones subunit beta family. As to quaternary structure, heterodimer of a common alpha chain and a unique beta chain which confers biological specificity to thyrotropin, lutropin, follitropin and gonadotropin.

Its subcellular location is the secreted. Promotes spermatogenesis and ovulation by stimulating the testes and ovaries to synthesize steroids. The chain is Lutropin subunit beta (LHB) from Ailurus fulgens (Himalayan red panda).